The primary structure comprises 930 residues: Translation initiation factor IF-2 (930 aa).

Positions 50-67 are enriched in low complexity; it reads FKPAAAPKVEAKPAAPKV. Disordered stretches follow at residues 50 to 196 and 260 to 346; these read FKPA…RIDF and EVVP…HELP. 2 stretches are compositionally biased toward basic and acidic residues: residues 68–90 and 110–125; these read SAEK…EAKP and FKAE…AERR. Residues 129-141 are compositionally biased toward low complexity; it reads KGNNRDQQQNGNR. 2 stretches are compositionally biased toward basic and acidic residues: residues 157-172 and 262-295; these read RDNR…EQGQ and VPEK…DGPR. Positions 309–318 are enriched in low complexity; that stretch reads NQKNSNWNNN. Basic and acidic residues predominate over residues 337–346; sequence VTERKFHELP. A tr-type G domain is found at 432 to 599; it reads ERPPVVTIMG…TVLLVAEIQE (168 aa). The G1 stretch occupies residues 441–448; the sequence is GHVDHGKT. Residue 441–448 participates in GTP binding; sequence GHVDHGKT. The tract at residues 466–470 is G2; the sequence is GITQH. The interval 487-490 is G3; sequence DTPG. Residues 487–491 and 541–544 contribute to the GTP site; these read DTPGH and NKID. The tract at residues 541–544 is G4; it reads NKID. The segment at 577–579 is G5; that stretch reads SAK.

The protein belongs to the TRAFAC class translation factor GTPase superfamily. Classic translation factor GTPase family. IF-2 subfamily.

It is found in the cytoplasm. Its function is as follows. One of the essential components for the initiation of protein synthesis. Protects formylmethionyl-tRNA from spontaneous hydrolysis and promotes its binding to the 30S ribosomal subunits. Also involved in the hydrolysis of GTP during the formation of the 70S ribosomal complex. The sequence is that of Translation initiation factor IF-2 from Streptococcus pneumoniae serotype 19F (strain G54).